The chain runs to 116 residues: Anti-sigma F factor antagonist (116 aa).

The STAS domain maps to 3–113 (LSIELEFKQD…PNEANALQKL (111 aa)). Ser-58 is subject to Phosphoserine.

Belongs to the anti-sigma-factor antagonist family. In terms of processing, phosphorylated by SpoIIAB on a serine residue.

In terms of biological role, in the phosphorylated form it could act as an anti-anti-sigma factor that counteracts SpoIIAB and thus releases sigma f from inhibition. This Priestia megaterium (Bacillus megaterium) protein is Anti-sigma F factor antagonist (spoIIAA).